A 426-amino-acid chain; its full sequence is Enolase (426 aa).

Glycine 41 provides a ligand contact to phosphoenolpyruvate. Residue serine 43 coordinates Mg(2+). Glutamate 165 serves as a coordination point for phosphoenolpyruvate. Positions 165 and 206 each coordinate (2R)-2-phosphoglycerate. The active-site Proton donor is the glutamate 206. Residues aspartate 243, glutamate 286, and aspartate 313 each contribute to the Mg(2+) site. The phosphoenolpyruvate site is built by aspartate 313, lysine 338, arginine 367, serine 368, and lysine 389. Positions 338, 367, and 368 each coordinate (2R)-2-phosphoglycerate. The Proton acceptor role is filled by lysine 338.

The protein belongs to the enolase family. In terms of assembly, homodimer. It depends on Mg(2+) as a cofactor.

The protein localises to the cytoplasm. It is found in the secreted. Its subcellular location is the cell surface. The catalysed reaction is (2R)-2-phosphoglycerate = phosphoenolpyruvate + H2O. It participates in carbohydrate degradation; glycolysis; pyruvate from D-glyceraldehyde 3-phosphate: step 4/5. In terms of biological role, catalyzes the reversible conversion of 2-phosphoglycerate (2-PG) into phosphoenolpyruvate (PEP). It is essential for the degradation of carbohydrates via glycolysis. In Chloroflexus aurantiacus (strain ATCC 29366 / DSM 635 / J-10-fl), this protein is Enolase.